A 138-amino-acid polypeptide reads, in one-letter code: MERTFAIIKPDAVERGLSGKIITKIEEAGFAIVGMKKIHLSRAQAEGFYYVHKERPFFNDLCSFMSRSPVIVMCLQKENAIADWRTLMGATNPANAEPGTIRKEFAKNIEENSSHGSDAPETAAFEIPYFFNSFELVG.

ATP-binding residues include lysine 9, phenylalanine 57, arginine 85, threonine 91, arginine 102, and asparagine 112. Histidine 115 functions as the Pros-phosphohistidine intermediate in the catalytic mechanism.

This sequence belongs to the NDK family. In terms of assembly, homotetramer. Mg(2+) is required as a cofactor.

The protein resides in the cytoplasm. The catalysed reaction is a 2'-deoxyribonucleoside 5'-diphosphate + ATP = a 2'-deoxyribonucleoside 5'-triphosphate + ADP. It catalyses the reaction a ribonucleoside 5'-diphosphate + ATP = a ribonucleoside 5'-triphosphate + ADP. Its function is as follows. Major role in the synthesis of nucleoside triphosphates other than ATP. The ATP gamma phosphate is transferred to the NDP beta phosphate via a ping-pong mechanism, using a phosphorylated active-site intermediate. The sequence is that of Nucleoside diphosphate kinase from Trichlorobacter lovleyi (strain ATCC BAA-1151 / DSM 17278 / SZ) (Geobacter lovleyi).